The following is a 250-amino-acid chain: 3-deoxy-manno-octulosonate cytidylyltransferase (250 aa).

Belongs to the KdsB family.

Its subcellular location is the cytoplasm. It catalyses the reaction 3-deoxy-alpha-D-manno-oct-2-ulosonate + CTP = CMP-3-deoxy-beta-D-manno-octulosonate + diphosphate. Its pathway is nucleotide-sugar biosynthesis; CMP-3-deoxy-D-manno-octulosonate biosynthesis; CMP-3-deoxy-D-manno-octulosonate from 3-deoxy-D-manno-octulosonate and CTP: step 1/1. It functions in the pathway bacterial outer membrane biogenesis; lipopolysaccharide biosynthesis. Its function is as follows. Activates KDO (a required 8-carbon sugar) for incorporation into bacterial lipopolysaccharide in Gram-negative bacteria. This Pectobacterium atrosepticum (strain SCRI 1043 / ATCC BAA-672) (Erwinia carotovora subsp. atroseptica) protein is 3-deoxy-manno-octulosonate cytidylyltransferase.